We begin with the raw amino-acid sequence, 853 residues long: Guanine nucleotide exchange protein smcr8a (853 aa).

The region spanning 47-219 (TSYAKFSKDF…KETELQKMNN (173 aa)) is the uDENN FLCN/SMCR8-type domain. Disordered regions lie at residues 272–298 (PVMD…SRKS) and 418–454 (LKPG…SFSS). Positions 280–298 (DTNPSDSAENTVETESRKS) are enriched in polar residues. In terms of domain architecture, cDENN FLCN/SMCR8-type spans 316–753 (RLKTLEELCD…LISHLADHRT (438 aa)). A compositionally biased stretch (low complexity) spans 421–432 (GVESGEGPPESS). The span at 433–454 (TSDITQETSEAADTETKGSFSS) shows a compositional bias: polar residues. The dDENN FLCN/SMCR8-type domain maps to 762–826 (FLHIQGMLTQ…IIQYLSELIK (65 aa)).

This sequence belongs to the SMCR8 family. Component of the C9orf72-SMCR8 complex. The C9orf72-SMCR8 complex associates with the ATG1/ULK1 kinase complex.

It localises to the cytoplasm. The protein resides in the nucleus. In terms of biological role, component of the C9orf72-SMCR8 complex, a complex that has guanine nucleotide exchange factor (GEF) activity and regulates autophagy. In the complex, C9orf72 and SMCR8 probably constitute the catalytic subunits that promote the exchange of GDP to GTP, converting inactive GDP-bound RAB8A and RAB39B into their active GTP-bound form, thereby promoting autophagosome maturation. The C9orf72-SMCR8 complex also acts as a negative regulator of autophagy initiation by interacting with the ATG1/ULK1 kinase complex and inhibiting its protein kinase activity. The protein is Guanine nucleotide exchange protein smcr8a (smcr8a) of Danio rerio (Zebrafish).